The sequence spans 307 residues: MASTSTSTQPSGWRHTASQYAALTKPRVTQLAVFCAVIGMFLATPGMVPWPVLIGGAVGIWLFAGAAFAINCLVERKIDAMMRRTAWRPSASGELGARQILLFSLVLGGAGMWTLHVFANDLTMWLTFATFIGYAIIYTLLLKPATPQNIVIGGLSGAMPPALGWAAVANSVPAEAWILVLIIFTWTPPHFWALALYRRADYAKSGLPMLPITHGEKFTLLHILLYTLIMVAATILPFVHGMSGYLYLAVALVLGFGFLVHAWRMYRNYSDALAQKTFRYSIVYLSLLFAALLIDHYFKFGPQGAAL.

Helical transmembrane passes span 28 to 48, 50 to 70, 100 to 120, 122 to 142, 149 to 169, 176 to 196, 218 to 238, 243 to 263, and 282 to 302; these read VTQLAVFCAVIGMFLATPGMV, WPVLIGGAVGIWLFAGAAFAI, ILLFSLVLGGAGMWTLHVFAN, LTMWLTFATFIGYAIIYTLLL, NIVIGGLSGAMPPALGWAAVA, AWILVLIIFTWTPPHFWALAL, FTLLHILLYTLIMVAATILPF, SGYLYLAVALVLGFGFLVHAW, and IVYLSLLFAALLIDHYFKFGP.

Belongs to the UbiA prenyltransferase family. Protoheme IX farnesyltransferase subfamily.

The protein localises to the cell inner membrane. The catalysed reaction is heme b + (2E,6E)-farnesyl diphosphate + H2O = Fe(II)-heme o + diphosphate. Its pathway is porphyrin-containing compound metabolism; heme O biosynthesis; heme O from protoheme: step 1/1. Its function is as follows. Converts heme B (protoheme IX) to heme O by substitution of the vinyl group on carbon 2 of heme B porphyrin ring with a hydroxyethyl farnesyl side group. In Ralstonia nicotianae (strain ATCC BAA-1114 / GMI1000) (Ralstonia solanacearum), this protein is Protoheme IX farnesyltransferase.